We begin with the raw amino-acid sequence, 403 residues long: Peroxisomal membrane protein PEX13 (403 aa).

Residues 1–11 (MASQPPPPPKP) are compositionally biased toward pro residues. Residues 1 to 68 (MASQPPPPPK…PSQQTGSSSV (68 aa)) are disordered. Over 1–134 (MASQPPPPPK…SSRGAFQSIE (134 aa)) the chain is Peroxisomal matrix. A compositionally biased stretch (polar residues) spans 59–68 (PSQQTGSSSV). The chain crosses the membrane as a helical span at residues 135-155 (SIVHAFASVSMMMDATFSAVY). A targeting to peroxisomes region spans residues 145–233 (MMMDATFSAV…EDRAATSAKS (89 aa)). Residues 156–174 (NSFRAVLDVANHFSRLKIH) are Cytoplasmic-facing. Residues 175 to 192 (FTKVFSAFALVRTIRYLY) form a helical membrane-spanning segment. The interval 175-196 (FTKVFSAFALVRTIRYLYRRLQ) is interaction with PEX19. Residues 193 to 233 (RRLQRMLGLRRGSENEDLWAESEGTVACLGAEDRAATSAKS) are Peroxisomal matrix-facing. Residues 234 to 254 (WPIFLFFAVILGGPYLIWKLL) traverse the membrane as a helical segment. The Cytoplasmic segment spans residues 255 to 403 (STHSDEVTDS…IGKDGEKQDL (149 aa)). Residues 272 to 336 (DDHVVARAEY…PANYVKILGK (65 aa)) form the SH3 domain. Ser-354 bears the Phosphoserine mark.

The protein belongs to the peroxin-13 family. In terms of assembly, interacts (via SH3 domain) with PEX14 (via SH3-binding motif); forming the PEX13-PEX14 docking complex. Interacts with PEX19.

The protein localises to the peroxisome membrane. Component of the PEX13-PEX14 docking complex, a translocon channel that specifically mediates the import of peroxisomal cargo proteins bound to PEX5 receptor. The PEX13-PEX14 docking complex forms a large import pore which can be opened to a diameter of about 9 nm. Mechanistically, PEX5 receptor along with cargo proteins associates with the PEX14 subunit of the PEX13-PEX14 docking complex in the cytosol, leading to the insertion of the receptor into the organelle membrane with the concomitant translocation of the cargo into the peroxisome matrix. Involved in the import of PTS1- and PTS2-type containing proteins. This chain is Peroxisomal membrane protein PEX13, found in Homo sapiens (Human).